Consider the following 223-residue polypeptide: UPF0441 protein YgiB (223 aa).

Low complexity predominate over residues 178 to 195; it reads TVPKTAMAPKPATTTTVT. Residues 178–223 form a disordered region; it reads TVPKTAMAPKPATTTTVTRGGFGESVAKQSTMQRSAAGTSTRSMGG. Residues 204-223 are compositionally biased toward polar residues; sequence AKQSTMQRSAAGTSTRSMGG.

This sequence belongs to the UPF0441 family.

In Salmonella heidelberg (strain SL476), this protein is UPF0441 protein YgiB.